A 136-amino-acid polypeptide reads, in one-letter code: Group 1 truncated hemoglobin GlbN (136 aa).

A heme-binding site is contributed by His81.

This sequence belongs to the truncated hemoglobin family. Group I subfamily. Homodimer. Requires heme as cofactor.

Its function is as follows. Binds oxygen cooperatively with very high affinity (P(50) = 0.013 mmHg at 20 degrees Celsius) because of a fast combination (25 microM(-1)sec(-1)) and a slow dissociation (0.2 sec(-1)) rate. The chain is Group 1 truncated hemoglobin GlbN (glbN) from Mycobacterium bovis (strain ATCC BAA-935 / AF2122/97).